Here is a 422-residue protein sequence, read N- to C-terminus: L-cysteine:1D-myo-inositol 2-amino-2-deoxy-alpha-D-glucopyranoside ligase (422 aa).

The interval 1–34 (MKSWSTPAPPTVPSRPDRLRLHDTATGRTRHPGN) is disordered. A compositionally biased stretch (basic and acidic residues) spans 15-25 (RPDRLRLHDTA). Residue Cys-44 participates in Zn(2+) binding. L-cysteinyl-5'-AMP is bound by residues 44 to 47 (CGIT), Thr-59, and 82 to 84 (NVT). Residues 46–56 (ITPYDATHLGH) carry the 'HIGH' region motif. The short motif at 196–201 (ERGGDP) is the 'ERGGDP' region element. L-cysteinyl-5'-AMP is bound at residue Trp-237. Residue Cys-241 participates in Zn(2+) binding. 259–261 (GSD) contacts L-cysteinyl-5'-AMP. A Zn(2+)-binding site is contributed by His-266. Val-292 provides a ligand contact to L-cysteinyl-5'-AMP. Positions 298–302 (KMSKS) match the 'KMSKS' region motif.

It belongs to the class-I aminoacyl-tRNA synthetase family. MshC subfamily. In terms of assembly, monomer. The cofactor is Zn(2+).

It catalyses the reaction 1D-myo-inositol 2-amino-2-deoxy-alpha-D-glucopyranoside + L-cysteine + ATP = 1D-myo-inositol 2-(L-cysteinylamino)-2-deoxy-alpha-D-glucopyranoside + AMP + diphosphate + H(+). Catalyzes the ATP-dependent condensation of GlcN-Ins and L-cysteine to form L-Cys-GlcN-Ins. This Micrococcus luteus (strain ATCC 4698 / DSM 20030 / JCM 1464 / CCM 169 / CCUG 5858 / IAM 1056 / NBRC 3333 / NCIMB 9278 / NCTC 2665 / VKM Ac-2230) (Micrococcus lysodeikticus) protein is L-cysteine:1D-myo-inositol 2-amino-2-deoxy-alpha-D-glucopyranoside ligase.